Consider the following 493-residue polypeptide: Non-cyanogenic beta-glucosidase (493 aa).

Positions 1–18 are cleaved as a signal peptide; that stretch reads MDFIVAIFALFVISSFTI. Asn34 carries an N-linked (GlcNAc...) asparagine glycan. Residues Gln54, His158, and 203-204 each bind a beta-D-glucoside; that span reads NE. The active-site Proton donor is the Glu204. N-linked (GlcNAc...) asparagine glycosylation is present at Asn335. Tyr346 is a binding site for a beta-D-glucoside. N-linked (GlcNAc...) asparagine glycans are attached at residues Asn371 and Asn412. Residues Glu422, Trp471, 478–479, and Phe487 contribute to the a beta-D-glucoside site; that span reads EW. The Nucleophile role is filled by Glu422.

Belongs to the glycosyl hydrolase 1 family. Leaves.

The catalysed reaction is Hydrolysis of terminal, non-reducing beta-D-glucosyl residues with release of beta-D-glucose.. The polypeptide is Non-cyanogenic beta-glucosidase (Trifolium repens (Creeping white clover)).